The sequence spans 151 residues: High mobility group B protein 14 (151 aa).

Disordered regions lie at residues 1–62 (MTKR…QTKM) and 132–151 (TKRM…DYSE). Low complexity predominate over residues 7–20 (KSGPLSPSCSGGSS). A compositionally biased stretch (basic residues) spans 35–56 (RSTRLRLQPLRKPKTSPKKKPV). The HMG box DNA-binding region spans 63-132 (PKKPATAFFF…EFHRAMTEYT (70 aa)). The segment covering 132-142 (TKRMESGAHDE) has biased composition (basic and acidic residues). Position 150 is a phosphoserine (Ser150).

The protein belongs to the HMGB family.

The protein resides in the nucleus. In Arabidopsis thaliana (Mouse-ear cress), this protein is High mobility group B protein 14 (HMGB14).